The chain runs to 462 residues: Toxin CfTX-2 (462 aa).

A signal peptide spans 1-17; the sequence is MILVSLLPLLFMTGIAS.

This sequence belongs to the jellyfish toxin family. Type I subfamily. In terms of assembly, oligomer. In terms of processing, contains disulfide bonds. Nematocytes.

It is found in the secreted. It localises to the nematocyst. The protein resides in the target cell membrane. Functionally, may cause profound effects on the cardiovascular system of anesthetized rats (at 25 ug/kg), since the fraction containing this toxin and CfTX-1 produces an initial increase in mean arterial pressure, followed by cardiovascular collapse in all animals within 1 minute of injection. To note, the same fraction does not induce significant change in heart rate. Has weak hemolytic activity. Is lethal to crayfish. Causes cutaneous inflammation in humans. May act as a pore-forming toxin, disrupting normal transmembrane ion concentration gradients in susceptible cells. This chain is Toxin CfTX-2, found in Chironex fleckeri (Australian box jellyfish).